We begin with the raw amino-acid sequence, 488 residues long: Palmitoleoyl-protein carboxylesterase notum1' (488 aa).

Residues 1 to 19 form the signal peptide; the sequence is MAGTLCVTLLLLLSTIAVG. N-linked (GlcNAc...) asparagine glycosylation is present at Asn-90. Catalysis depends on charge relay system residues Ser-226, Asp-334, and His-383.

Belongs to the pectinacetylesterase family. Notum subfamily. As to expression, expressed in the egg and through cleavage to gastrulation stages. Enriched in the animal (prospective ectoderm) and dorsal regions in early gastrula. Shows a dynamic expression during embryogenesis, in particular during neural induction and antero-posterior (AP) patterning.

It localises to the secreted. It carries out the reaction [Wnt protein]-O-(9Z)-hexadecenoyl-L-serine + H2O = [Wnt protein]-L-serine + (9Z)-hexadecenoate + H(+). Functionally, carboxylesterase that acts as a key negative regulator of the Wnt signaling pathway by specifically mediating depalmitoleoylation of WNT proteins. Serine palmitoleoylation of WNT proteins is required for efficient binding to frizzled receptors. Functions in the prospective ectoderm and is required for neural induction. In Xenopus laevis (African clawed frog), this protein is Palmitoleoyl-protein carboxylesterase notum1'.